The primary structure comprises 430 residues: Enolase (430 aa).

Q164 is a (2R)-2-phosphoglycerate binding site. E208 (proton donor) is an active-site residue. Mg(2+) is bound by residues D245, E288, and D315. The (2R)-2-phosphoglycerate site is built by K340, R369, S370, and K391. K340 serves as the catalytic Proton acceptor.

It belongs to the enolase family. It depends on Mg(2+) as a cofactor.

It localises to the cytoplasm. It is found in the secreted. The protein localises to the cell surface. It catalyses the reaction (2R)-2-phosphoglycerate = phosphoenolpyruvate + H2O. Its pathway is carbohydrate degradation; glycolysis; pyruvate from D-glyceraldehyde 3-phosphate: step 4/5. Catalyzes the reversible conversion of 2-phosphoglycerate (2-PG) into phosphoenolpyruvate (PEP). It is essential for the degradation of carbohydrates via glycolysis. The polypeptide is Enolase (Thermococcus gammatolerans (strain DSM 15229 / JCM 11827 / EJ3)).